Consider the following 800-residue polypeptide: Phenylalanine--tRNA ligase beta subunit (800 aa).

Positions 39–154 (TKDIKNLVVG…ESQVPGTDAL (116 aa)) constitute a tRNA-binding domain. Residues 408–483 (AFITPIDITA…RIYGYDDIPS (76 aa)) enclose the B5 domain. Mg(2+) contacts are provided by Asp-461, Asp-467, Glu-470, and Glu-471. One can recognise an FDX-ACB domain in the interval 708–800 (PRFPGMSRDI…ALIEQGAVIR (93 aa)).

Belongs to the phenylalanyl-tRNA synthetase beta subunit family. Type 1 subfamily. In terms of assembly, tetramer of two alpha and two beta subunits. It depends on Mg(2+) as a cofactor.

It is found in the cytoplasm. The catalysed reaction is tRNA(Phe) + L-phenylalanine + ATP = L-phenylalanyl-tRNA(Phe) + AMP + diphosphate + H(+). This chain is Phenylalanine--tRNA ligase beta subunit, found in Staphylococcus aureus (strain MSSA476).